The primary structure comprises 380 residues: Chaperone protein DnaJ (380 aa).

The J domain occupies 5–70 (DFYEVLGVSK…NLRARYDQYG (66 aa)). The CR-type zinc finger occupies 135–213 (GVSKEIKVPS…CHGEGRYQKT (79 aa)). Zn(2+) contacts are provided by Cys-148, Cys-151, Cys-165, Cys-168, Cys-187, Cys-190, Cys-201, and Cys-204. CXXCXGXG motif repeat units follow at residues 148-155 (CEVCNGSG), 165-172 (CPTCHGAG), 187-194 (CPHCHGRG), and 201-208 (CRKCHGEG).

Belongs to the DnaJ family. In terms of assembly, homodimer. It depends on Zn(2+) as a cofactor.

It is found in the cytoplasm. Its function is as follows. Participates actively in the response to hyperosmotic and heat shock by preventing the aggregation of stress-denatured proteins and by disaggregating proteins, also in an autonomous, DnaK-independent fashion. Unfolded proteins bind initially to DnaJ; upon interaction with the DnaJ-bound protein, DnaK hydrolyzes its bound ATP, resulting in the formation of a stable complex. GrpE releases ADP from DnaK; ATP binding to DnaK triggers the release of the substrate protein, thus completing the reaction cycle. Several rounds of ATP-dependent interactions between DnaJ, DnaK and GrpE are required for fully efficient folding. Also involved, together with DnaK and GrpE, in the DNA replication of plasmids through activation of initiation proteins. The sequence is that of Chaperone protein DnaJ from Aeromonas salmonicida (strain A449).